A 314-amino-acid polypeptide reads, in one-letter code: Ribosomal RNA small subunit methyltransferase H (314 aa).

S-adenosyl-L-methionine is bound by residues 32 to 34, Asp-52, Phe-79, Asp-100, and Gln-107; that span reads GGH.

It belongs to the methyltransferase superfamily. RsmH family.

It localises to the cytoplasm. The enzyme catalyses cytidine(1402) in 16S rRNA + S-adenosyl-L-methionine = N(4)-methylcytidine(1402) in 16S rRNA + S-adenosyl-L-homocysteine + H(+). Specifically methylates the N4 position of cytidine in position 1402 (C1402) of 16S rRNA. The polypeptide is Ribosomal RNA small subunit methyltransferase H (Shouchella clausii (strain KSM-K16) (Alkalihalobacillus clausii)).